A 438-amino-acid polypeptide reads, in one-letter code: Indole diterpene prenyltransferase janD (438 aa).

F80–M81 provides a ligand contact to L-tryptophan. Residues R102, K190, R264, K266, Y268, Y350, Y414, and Y418 each contribute to the substrate site.

This sequence belongs to the tryptophan dimethylallyltransferase family.

The protein operates within secondary metabolite biosynthesis. Functionally, indole diterpene prenyltransferase; part of the gene cluster that mediates the biosynthesis of the indole diterpenes janthitremanes such as shearinine K or shearinine A. The geranylgeranyl diphosphate (GGPP) synthase janG catalyzes the first step in janthitremane biosynthesis via conversion of farnesyl pyrophosphate and isopentyl pyrophosphate into geranylgeranyl pyrophosphate (GGPP). Condensation of indole-3-glycerol phosphate with GGPP by the prenyl transferase janC then forms 3-geranylgeranylindole (3-GGI). Epoxidation by the FAD-dependent monooxygenase janM leads to a epoxidized-GGI that is substrate of the terpene cyclase janB for cyclization to yield paspaline. Paspaline is subsequently converted to 13-desoxypaspaline by the cytochrome P450 monooxygenase janP, via beta-PC-M6 in a series of alpha-face oxidations. The cytochrome P450 monooxygenase janQ is proposed to carry out sequential beta-face oxidation steps at C-7 and C-13 of 13-desoxypaspaline to form paspalicine and paspalinine respectively. The indole diterpene prenyltransferase janD may then convert paspalinine into shearinine K which is substrate of janO and/or additional enzymes for oxidation and cyclization to generate shearinine A. This is Indole diterpene prenyltransferase janD from Penicillium janthinellum (Penicillium vitale).